A 348-amino-acid chain; its full sequence is Ion-translocating oxidoreductase complex subunit D (348 aa).

At 1 to 22 (MAFFIASSPHLRSKRSTADVMR) the chain is on the cytoplasmic side. Helical transmembrane passes span 23 to 43 (WVLV…GYGT) and 44 to 64 (LIQL…IMLL). Residues 65–71 (RKRSPIS) are Cytoplasmic-facing. A helical transmembrane segment spans residues 72–91 (ALRDYSAVVTAWLLAVAIPP). The Periplasmic segment spans residues 92–94 (LSP). The chain crosses the membrane as a helical span at residues 95 to 117 (WWVVVIGLIFAIVIAKHLYGGLG). The Cytoplasmic segment spans residues 118-125 (QNPFNPAM). The chain crosses the membrane as a helical span at residues 126-146 (IAYVVLLISFPVQMTSWMAPI). Residues 147–213 (KLTAEPSSLV…ETLTQPQFSG (67 aa)) lie on the Periplasmic side of the membrane. Position 187 is an FMN phosphoryl threonine (threonine 187). The chain crosses the membrane as a helical span at residues 214 to 234 (FAGIGWEWVNIAYLLGGLILL). Residues 235-242 (KLRIIRWH) lie on the Cytoplasmic side of the membrane. A helical transmembrane segment spans residues 243-263 (IPVAMLAGLVFTALLAQLFAP). Residues 264-265 (GT) lie on the Periplasmic side of the membrane. The chain crosses the membrane as a helical span at residues 266–286 (TASPMIHLLSGATMLGAFFIA). Topologically, residues 287–299 (TDPVSASTTDKGR) are cytoplasmic. The next 2 membrane-spanning stretches (helical) occupy residues 300 to 320 (LIYG…GGFP) and 321 to 341 (DGVA…DYYT). Topologically, residues 342–348 (KPRTYGH) are cytoplasmic.

The protein belongs to the NqrB/RnfD family. The complex is composed of six subunits: RnfA, RnfB, RnfC, RnfD, RnfE and RnfG. The cofactor is FMN.

It is found in the cell inner membrane. Functionally, part of a membrane-bound complex that couples electron transfer with translocation of ions across the membrane. This is Ion-translocating oxidoreductase complex subunit D from Vibrio cholerae serotype O1 (strain ATCC 39541 / Classical Ogawa 395 / O395).